The primary structure comprises 105 residues: MDVDIIDEDENPMLHRTDVRFQLTHEEATPSRLSVRDSLAAKLNKDASEVVVRKLDTKYGMRKTVGHAKVYDSADDAKAVEQDHALERNKIEADEEADEEAAEEA.

The disordered stretch occupies residues 86 to 105 (LERNKIEADEEADEEAAEEA). The span at 93 to 105 (ADEEADEEAAEEA) shows a compositional bias: acidic residues.

The protein belongs to the eukaryotic ribosomal protein eS24 family.

The sequence is that of Small ribosomal subunit protein eS24 from Natronomonas pharaonis (strain ATCC 35678 / DSM 2160 / CIP 103997 / JCM 8858 / NBRC 14720 / NCIMB 2260 / Gabara) (Halobacterium pharaonis).